Reading from the N-terminus, the 135-residue chain is VapC ribonuclease aq_1901 (135 aa).

The PINc domain maps to 3–130; that stretch reads LLDTTVLLDF…FKKLGFKTVN (128 aa). Aspartate 5 lines the Mg(2+) pocket.

The protein belongs to the PINc/VapC protein family. Mg(2+) is required as a cofactor.

Toxic component of a type II toxin-antitoxin (TA) system. An RNase. This chain is VapC ribonuclease aq_1901, found in Aquifex aeolicus (strain VF5).